The sequence spans 118 residues: Large ribosomal subunit protein bL20 (118 aa).

Belongs to the bacterial ribosomal protein bL20 family.

In terms of biological role, binds directly to 23S ribosomal RNA and is necessary for the in vitro assembly process of the 50S ribosomal subunit. It is not involved in the protein synthesizing functions of that subunit. This chain is Large ribosomal subunit protein bL20, found in Marinomonas sp. (strain MWYL1).